Here is a 637-residue protein sequence, read N- to C-terminus: tRNA uridine 5-carboxymethylaminomethyl modification enzyme MnmG (637 aa).

Position 18-23 (18-23) interacts with FAD; the sequence is GAGHAG. 281–295 provides a ligand contact to NAD(+); that stretch reads GPRYCPSIEDKIVRF.

It belongs to the MnmG family. In terms of assembly, homodimer. Heterotetramer of two MnmE and two MnmG subunits. Requires FAD as cofactor.

The protein resides in the cytoplasm. In terms of biological role, NAD-binding protein involved in the addition of a carboxymethylaminomethyl (cmnm) group at the wobble position (U34) of certain tRNAs, forming tRNA-cmnm(5)s(2)U34. The sequence is that of tRNA uridine 5-carboxymethylaminomethyl modification enzyme MnmG from Ligilactobacillus salivarius (strain UCC118) (Lactobacillus salivarius).